The sequence spans 300 residues: Formylmethanofuran--tetrahydromethanopterin formyltransferase-like protein (300 aa).

The protein belongs to the FTR family.

This is Formylmethanofuran--tetrahydromethanopterin formyltransferase-like protein from Methanopyrus kandleri (strain AV19 / DSM 6324 / JCM 9639 / NBRC 100938).